Reading from the N-terminus, the 187-residue chain is UPF0301 protein Spro_4027 (187 aa).

This sequence belongs to the UPF0301 (AlgH) family.

In Serratia proteamaculans (strain 568), this protein is UPF0301 protein Spro_4027.